Here is a 424-residue protein sequence, read N- to C-terminus: MFS-type transporter opdF (424 aa).

Positions 1–10 (MSDTSLEKGN) are enriched in basic and acidic residues. Positions 1–23 (MSDTSLEKGNEGPTAEAPKVAPP) are disordered. 5 consecutive transmembrane segments (helical) span residues 36 to 56 (VAGASVALFVSFGWVNCIALF), 102 to 122 (VPIAIGSFLHVFGLMMASLST), 127 to 147 (LMLSQSVVSGIGSSLIFTPAM), 160 to 180 (IVGGLTVAGSSLGGVVFPLMV), and 187 to 207 (VGFGWTMRICAFMILGLLVFA). N208 carries N-linked (GlcNAc...) asparagine glycosylation. 6 helical membrane passes run 239–259 (LCVASFFMYWGIFIPFDYIVV), 265–285 (GMSTQMAWSLVPILNGASFFG), 299–319 (FNVMIVMTTLSAILVLALWLP), 329–349 (FAALFGITSGAIIGLGPVLIV), 364–384 (VLAFAAVGTLTSPPIGGAIAA), and 391–411 (TYTCVFSGVSFLIGTLGLAAL).

The protein belongs to the major facilitator superfamily. Monocarboxylate porter (TC 2.A.1.13) family.

The protein localises to the membrane. Its function is as follows. MFS-type transporter; part of the gene cluster that mediates the biosynthesis of oxopyrrolidines, polyketide-amino acid hybrid compounds with feature structures of tetramic acid. The sequence is that of MFS-type transporter opdF from Penicillium oxalicum (strain 114-2 / CGMCC 5302) (Penicillium decumbens).